The chain runs to 443 residues: MRLSRYFLPILRETPKEAEIVSHRLMLRAGMIRQEAAGIYAWLPLGLRVLNRVTEVIRAEQDRSGAIELLMPTIQSAELWRESGRYEAYGKEMLRIRDRHEREMLFGPTNEEMITAIFRSAVRSYKDLPKNLYHIQWKFRDEVRPRFGTMRSREFLMKDAYSFDLDEAGARHAYNKMFVAYLRTFARLGLKAIPMRAETGPIGGNLSHEFIILAQTGESEVFCDRAYLGFPIPPASIDFDDVAALQATVDHWTSRYAATSEMHEPAAFEAVPEEARMAARGIEVGHIFYFGTKYSEPMGARVTGPDGQERPVHMGSYGIGPSRLVAAIIEASHDEAGIVWPDSVAPFDVALLNLKVGDAATDAACAKLQEELEAAGLTVLTDDRDERPGAKFATADLIGLPWQVIVGPKGLAEGTIELKRRATGEREIVAVDAVAPRLRGAKE.

Belongs to the class-II aminoacyl-tRNA synthetase family. ProS type 2 subfamily. Homodimer.

Its subcellular location is the cytoplasm. The enzyme catalyses tRNA(Pro) + L-proline + ATP = L-prolyl-tRNA(Pro) + AMP + diphosphate. In terms of biological role, catalyzes the attachment of proline to tRNA(Pro) in a two-step reaction: proline is first activated by ATP to form Pro-AMP and then transferred to the acceptor end of tRNA(Pro). This chain is Proline--tRNA ligase, found in Methylobacterium nodulans (strain LMG 21967 / CNCM I-2342 / ORS 2060).